The chain runs to 342 residues: Methylthioribose-1-phosphate isomerase (342 aa).

Substrate is bound by residues R49–A51, R86, and Q187. The active-site Proton donor is D228. A substrate-binding site is contributed by N238–K239.

It belongs to the eIF-2B alpha/beta/delta subunits family. MtnA subfamily.

It carries out the reaction 5-(methylsulfanyl)-alpha-D-ribose 1-phosphate = 5-(methylsulfanyl)-D-ribulose 1-phosphate. The protein operates within amino-acid biosynthesis; L-methionine biosynthesis via salvage pathway; L-methionine from S-methyl-5-thio-alpha-D-ribose 1-phosphate: step 1/6. Its function is as follows. Catalyzes the interconversion of methylthioribose-1-phosphate (MTR-1-P) into methylthioribulose-1-phosphate (MTRu-1-P). This chain is Methylthioribose-1-phosphate isomerase, found in Enterobacter sp. (strain 638).